Here is a 140-residue protein sequence, read N- to C-terminus: Nuclear receptor 2C2-associated protein (140 aa).

This sequence belongs to the NR2C2AP family. In terms of assembly, interacts with NR2C2/TR4.

Its subcellular location is the nucleus. In terms of biological role, may act as a repressor of NR2C2-mediated transactivation by suppressing the binding between NR2C2/TR4 and the TR4-response element in target genes. The sequence is that of Nuclear receptor 2C2-associated protein (Nr2c2ap) from Mus musculus (Mouse).